Here is a 319-residue protein sequence, read N- to C-terminus: Tetrahydromethanopterin S-methyltransferase subunit H (319 aa).

It belongs to the MtrH family. The complex is composed of 8 subunits; MtrA, MtrB, MtrC, MtrD, MtrE, MtrF, MtrG and MtrH.

The enzyme catalyses 5-methyl-5,6,7,8-tetrahydromethanopterin + coenzyme M + 2 Na(+)(in) = 5,6,7,8-tetrahydromethanopterin + methyl-coenzyme M + 2 Na(+)(out). The protein operates within one-carbon metabolism; methanogenesis from CO(2); methyl-coenzyme M from 5,10-methylene-5,6,7,8-tetrahydromethanopterin: step 2/2. Functionally, part of a complex that catalyzes the formation of methyl-coenzyme M and tetrahydromethanopterin from coenzyme M and methyl-tetrahydromethanopterin. This is an energy-conserving, sodium-ion translocating step. MtrH catalyzes the transfer of the methyl group from methyl-tetrahydromethanopterin to the corrinoid prosthetic group of MtrA. In Methanococcus vannielii (strain ATCC 35089 / DSM 1224 / JCM 13029 / OCM 148 / SB), this protein is Tetrahydromethanopterin S-methyltransferase subunit H.